The following is a 975-amino-acid chain: 26S proteasome non-ATPase regulatory subunit 1 (975 aa).

Residues 272-303 (EKKSTTTTTTTPASDSMEIDIDSGNEKSGGSS) are disordered. PC repeat units lie at residues 393 to 426 (SAIS…NQTP), 431 to 464 (GSLY…ILHH), 465 to 499 (GASL…VSGE), 500 to 534 (AAGL…EKTI), 536 to 569 (SLSM…LIRY), 570 to 605 (GGMY…SVRR), 606 to 638 (AAVT…PHVR), 640 to 674 (GAAF…YVKQ), 675 to 715 (AAWI…DSMS), and 718 to 748 (GAVL…NMNA). 2 disordered regions span residues 832–882 (SSRS…KSNP) and 922–975 (PEQL…EFTE). 2 stretches are compositionally biased toward basic and acidic residues: residues 842–880 (DVEK…ERKS) and 926–935 (VVKEKPETKQ). Low complexity predominate over residues 944–961 (TATATASLPNATTTTSPT).

This sequence belongs to the proteasome subunit S1 family.

Functionally, acts as a regulatory subunit of the 26 proteasome which is involved in the ATP-dependent degradation of ubiquitinated proteins. The sequence is that of 26S proteasome non-ATPase regulatory subunit 1 (psmD1) from Dictyostelium discoideum (Social amoeba).